A 257-amino-acid chain; its full sequence is Sulfur carrier protein FdhD (257 aa).

C105 acts as the Cysteine persulfide intermediate in catalysis.

This sequence belongs to the FdhD family.

The protein localises to the cytoplasm. Its function is as follows. Required for formate dehydrogenase (FDH) activity. Acts as a sulfur carrier protein that transfers sulfur from IscS to the molybdenum cofactor prior to its insertion into FDH. This chain is Sulfur carrier protein FdhD, found in Saccharolobus solfataricus (strain ATCC 35092 / DSM 1617 / JCM 11322 / P2) (Sulfolobus solfataricus).